The following is a 94-amino-acid chain: DNA-directed RNA polymerase subunit omega (94 aa).

Belongs to the RNA polymerase subunit omega family. In terms of assembly, the RNAP catalytic core consists of 2 alpha, 1 beta, 1 beta' and 1 omega subunit. When a sigma factor is associated with the core the holoenzyme is formed, which can initiate transcription.

It carries out the reaction RNA(n) + a ribonucleoside 5'-triphosphate = RNA(n+1) + diphosphate. Functionally, promotes RNA polymerase assembly. Latches the N- and C-terminal regions of the beta' subunit thereby facilitating its interaction with the beta and alpha subunits. This is DNA-directed RNA polymerase subunit omega from Parafrankia sp. (strain EAN1pec).